The sequence spans 172 residues: RNA pyrophosphohydrolase (172 aa).

A Nudix hydrolase domain is found at 6 to 149; sequence GFRANVGIII…KRDVYRKVMK (144 aa). The Nudix box motif lies at 38–59; the sequence is GGVDEGETPEEAMFRELYEEVG.

This sequence belongs to the Nudix hydrolase family. RppH subfamily. It depends on a divalent metal cation as a cofactor.

Its function is as follows. Accelerates the degradation of transcripts by removing pyrophosphate from the 5'-end of triphosphorylated RNA, leading to a more labile monophosphorylated state that can stimulate subsequent ribonuclease cleavage. The polypeptide is RNA pyrophosphohydrolase (Shewanella sediminis (strain HAW-EB3)).